The sequence spans 136 residues: UPF0213 protein ASA_0550 (136 aa).

In terms of domain architecture, GIY-YIG spans 17-92 (GQWSIYLVRT…KQQSKAFKER (76 aa)).

It belongs to the UPF0213 family.

This Aeromonas salmonicida (strain A449) protein is UPF0213 protein ASA_0550.